The chain runs to 418 residues: Probable carboxypeptidase AO090166000075 (418 aa).

The N-terminal stretch at 1–18 (MKATDLFHVTALVAGALA) is a signal peptide. N-linked (GlcNAc...) asparagine glycosylation occurs at asparagine 74. Aspartate 147 is a Zn(2+) binding site. Asparagine 168 carries N-linked (GlcNAc...) asparagine glycosylation. Glutamate 179 (proton acceptor) is an active-site residue. Glutamate 180 provides a ligand contact to Zn(2+).

Belongs to the peptidase M20A family. It depends on Zn(2+) as a cofactor.

It localises to the secreted. The protein is Probable carboxypeptidase AO090166000075 of Aspergillus oryzae (strain ATCC 42149 / RIB 40) (Yellow koji mold).